A 261-amino-acid polypeptide reads, in one-letter code: Thiazole synthase (261 aa).

The active-site Schiff-base intermediate with DXP is the Lys-98. 1-deoxy-D-xylulose 5-phosphate is bound by residues Gly-159, 185-186, and 207-208; these read AG and AS.

This sequence belongs to the ThiG family. As to quaternary structure, homotetramer. Forms heterodimers with either ThiH or ThiS.

The protein localises to the cytoplasm. It catalyses the reaction [ThiS sulfur-carrier protein]-C-terminal-Gly-aminoethanethioate + 2-iminoacetate + 1-deoxy-D-xylulose 5-phosphate = [ThiS sulfur-carrier protein]-C-terminal Gly-Gly + 2-[(2R,5Z)-2-carboxy-4-methylthiazol-5(2H)-ylidene]ethyl phosphate + 2 H2O + H(+). It participates in cofactor biosynthesis; thiamine diphosphate biosynthesis. In terms of biological role, catalyzes the rearrangement of 1-deoxy-D-xylulose 5-phosphate (DXP) to produce the thiazole phosphate moiety of thiamine. Sulfur is provided by the thiocarboxylate moiety of the carrier protein ThiS. In vitro, sulfur can be provided by H(2)S. The sequence is that of Thiazole synthase from Mycobacterium leprae (strain Br4923).